The primary structure comprises 359 residues: Probable dual-specificity RNA methyltransferase RlmN (359 aa).

The Proton acceptor role is filled by Glu-91. The Radical SAM core domain occupies 97 to 329 (QHYGHSVCVT…KKNGVNCVVR (233 aa)). The cysteines at positions 104 and 340 are disulfide-linked. Residues Cys-111, Cys-115, and Cys-118 each contribute to the [4Fe-4S] cluster site. Residues 163-164 (GE), Ser-195, 218-220 (SLH), and Asn-296 contribute to the S-adenosyl-L-methionine site. Residue Cys-340 is the S-methylcysteine intermediate of the active site.

It belongs to the radical SAM superfamily. RlmN family. Requires [4Fe-4S] cluster as cofactor.

The protein resides in the cytoplasm. It catalyses the reaction adenosine(2503) in 23S rRNA + 2 reduced [2Fe-2S]-[ferredoxin] + 2 S-adenosyl-L-methionine = 2-methyladenosine(2503) in 23S rRNA + 5'-deoxyadenosine + L-methionine + 2 oxidized [2Fe-2S]-[ferredoxin] + S-adenosyl-L-homocysteine. The catalysed reaction is adenosine(37) in tRNA + 2 reduced [2Fe-2S]-[ferredoxin] + 2 S-adenosyl-L-methionine = 2-methyladenosine(37) in tRNA + 5'-deoxyadenosine + L-methionine + 2 oxidized [2Fe-2S]-[ferredoxin] + S-adenosyl-L-homocysteine. In terms of biological role, specifically methylates position 2 of adenine 2503 in 23S rRNA and position 2 of adenine 37 in tRNAs. This Streptococcus pyogenes serotype M3 (strain ATCC BAA-595 / MGAS315) protein is Probable dual-specificity RNA methyltransferase RlmN.